Here is a 108-residue protein sequence, read N- to C-terminus: Replication initiation control protein YabA (108 aa).

Zn(2+) is bound by residues His83, Cys85, Cys99, and Cys102.

This sequence belongs to the YabA family. In terms of assembly, homotetramer. Interacts with both DnaA and DnaN, acting as a bridge between these two proteins. The cofactor is Zn(2+).

The protein resides in the cytoplasm. The protein localises to the nucleoid. Its function is as follows. Involved in control of chromosome replication initiation. Inhibits the cooperative binding of DnaA to the oriC region, thus negatively regulating initiation of chromosome replication. Inhibits the ability of DnaA-ATP to form a helix on DNA; does not disassemble preformed DnaA-DNA helices. Decreases the residence time of DnaA on the chromosome at its binding sites (oriC, replication forks and promoter-binding sites). Tethers DnaA to the replication machinery via the DNA polymerase beta sliding clamp subunit (dnaN). Associates with oriC and other DnaA targets on the chromosome in a DnaA-dependent manner. This is Replication initiation control protein YabA from Lactococcus lactis subsp. cremoris (strain SK11).